The primary structure comprises 132 residues: Small ribosomal subunit protein uS8 (132 aa).

The protein belongs to the universal ribosomal protein uS8 family. As to quaternary structure, part of the 30S ribosomal subunit. Contacts proteins S5 and S12.

Its function is as follows. One of the primary rRNA binding proteins, it binds directly to 16S rRNA central domain where it helps coordinate assembly of the platform of the 30S subunit. The chain is Small ribosomal subunit protein uS8 from Agrobacterium fabrum (strain C58 / ATCC 33970) (Agrobacterium tumefaciens (strain C58)).